The chain runs to 85 residues: Defensin-like protein 112 (85 aa).

The signal sequence occupies residues 1–24 (MAISKKMLTTFVLTILLAVSFVHC). 4 cysteine pairs are disulfide-bonded: Cys40-Cys80, Cys46-Cys71, Cys56-Cys78, and Cys60-Cys79.

This sequence belongs to the DEFL family.

It localises to the secreted. In Arabidopsis thaliana (Mouse-ear cress), this protein is Defensin-like protein 112.